The chain runs to 58 residues: Large ribosomal subunit protein uL30 (58 aa).

It belongs to the universal ribosomal protein uL30 family. Part of the 50S ribosomal subunit.

This Vibrio campbellii (strain ATCC BAA-1116) protein is Large ribosomal subunit protein uL30.